A 182-amino-acid polypeptide reads, in one-letter code: MEHEVVSALAAFTQRYVACWQQEKGHLPASEALYGIPSPCIVENHEDTVYWSPQPFAPSVALDGVERALEISLHPDVHAFYTAQYAGDMAAQFDSLSCQLLQVWSEEDFTRMQENLIGHLLTQKRLKLTPTLFLATTDSEMTMVSLCNVSGEIVLEAFGTKKRQHLAPTLAAFLSGLNPLAV.

It belongs to the Syd family.

The protein resides in the cell inner membrane. In terms of biological role, interacts with the SecY protein in vivo. May bind preferentially to an uncomplexed state of SecY, thus functioning either as a chelating agent for excess SecY in the cell or as a regulatory factor that negatively controls the translocase function. This Pectobacterium atrosepticum (strain SCRI 1043 / ATCC BAA-672) (Erwinia carotovora subsp. atroseptica) protein is Protein Syd.